We begin with the raw amino-acid sequence, 400 residues long: Enoyl-[acyl-carrier-protein] reductase [NADH] (400 aa).

NAD(+) is bound by residues 48 to 53, 74 to 75, 111 to 112, and 139 to 140; these read GSSSGY, FE, DA, and LA. Position 225 (Tyr-225) interacts with substrate. The active-site Proton donor is the Tyr-235. NAD(+) is bound by residues Lys-244 and 273 to 275; that span reads VVT.

It belongs to the TER reductase family. In terms of assembly, monomer.

It carries out the reaction a 2,3-saturated acyl-[ACP] + NAD(+) = a (2E)-enoyl-[ACP] + NADH + H(+). It participates in lipid metabolism; fatty acid biosynthesis. Involved in the final reduction of the elongation cycle of fatty acid synthesis (FAS II). Catalyzes the reduction of a carbon-carbon double bond in an enoyl moiety that is covalently linked to an acyl carrier protein (ACP). This is Enoyl-[acyl-carrier-protein] reductase [NADH] from Shewanella baltica (strain OS185).